A 571-amino-acid chain; its full sequence is Proline--tRNA ligase (571 aa).

The protein belongs to the class-II aminoacyl-tRNA synthetase family. ProS type 1 subfamily. As to quaternary structure, homodimer.

Its subcellular location is the cytoplasm. The enzyme catalyses tRNA(Pro) + L-proline + ATP = L-prolyl-tRNA(Pro) + AMP + diphosphate. In terms of biological role, catalyzes the attachment of proline to tRNA(Pro) in a two-step reaction: proline is first activated by ATP to form Pro-AMP and then transferred to the acceptor end of tRNA(Pro). As ProRS can inadvertently accommodate and process non-cognate amino acids such as alanine and cysteine, to avoid such errors it has two additional distinct editing activities against alanine. One activity is designated as 'pretransfer' editing and involves the tRNA(Pro)-independent hydrolysis of activated Ala-AMP. The other activity is designated 'posttransfer' editing and involves deacylation of mischarged Ala-tRNA(Pro). The misacylated Cys-tRNA(Pro) is not edited by ProRS. This chain is Proline--tRNA ligase, found in Pseudoalteromonas atlantica (strain T6c / ATCC BAA-1087).